The sequence spans 165 residues: Large ribosomal subunit protein uL5 (165 aa).

This sequence belongs to the universal ribosomal protein uL5 family. Part of the 50S ribosomal subunit; contacts the 5S rRNA and probably tRNA. Forms a bridge to the 30S subunit in the 70S ribosome.

Functionally, this is one of the proteins that bind and probably mediate the attachment of the 5S RNA into the large ribosomal subunit, where it forms part of the central protuberance. In the 70S ribosome it contacts protein S13 of the 30S subunit (bridge B1b), connecting the 2 subunits; this bridge is implicated in subunit movement. May contact the P site tRNA; the 5S rRNA and some of its associated proteins might help stabilize positioning of ribosome-bound tRNAs. This Methanoregula boonei (strain DSM 21154 / JCM 14090 / 6A8) protein is Large ribosomal subunit protein uL5.